The chain runs to 434 residues: ATP phosphoribosyltransferase regulatory subunit (434 aa).

The disordered stretch occupies residues 1–48; it reads MYGRGSGAEHSRGSGAEHFWDPRPEASSTVSSSLRPPSGARDLLPREV. The segment covering 27-38 has biased composition (low complexity); the sequence is SSTVSSSLRPPS.

It belongs to the class-II aminoacyl-tRNA synthetase family. HisZ subfamily. In terms of assembly, heteromultimer composed of HisG and HisZ subunits.

The protein resides in the cytoplasm. Its pathway is amino-acid biosynthesis; L-histidine biosynthesis; L-histidine from 5-phospho-alpha-D-ribose 1-diphosphate: step 1/9. Functionally, required for the first step of histidine biosynthesis. May allow the feedback regulation of ATP phosphoribosyltransferase activity by histidine. In Synechococcus sp. (strain JA-2-3B'a(2-13)) (Cyanobacteria bacterium Yellowstone B-Prime), this protein is ATP phosphoribosyltransferase regulatory subunit.